The sequence spans 234 residues: Glucosamine-6-phosphate deaminase (234 aa).

Asp62 functions as the Proton acceptor; for enolization step in the catalytic mechanism. Asn128 functions as the For ring-opening step in the catalytic mechanism. His130 functions as the Proton acceptor; for ring-opening step in the catalytic mechanism. The active-site For ring-opening step is Glu135.

Belongs to the glucosamine/galactosamine-6-phosphate isomerase family. NagB subfamily.

The catalysed reaction is alpha-D-glucosamine 6-phosphate + H2O = beta-D-fructose 6-phosphate + NH4(+). It participates in amino-sugar metabolism; N-acetylneuraminate degradation; D-fructose 6-phosphate from N-acetylneuraminate: step 5/5. Its function is as follows. Catalyzes the reversible isomerization-deamination of glucosamine 6-phosphate (GlcN6P) to form fructose 6-phosphate (Fru6P) and ammonium ion. The sequence is that of Glucosamine-6-phosphate deaminase from Streptococcus suis (strain 98HAH33).